The chain runs to 281 residues: CCAAT/enhancer-binding protein epsilon (281 aa).

The disordered stretch occupies residues 1 to 30 (MSHGTYYECEPRGGQQPLEFSGGRAGPGEL). Lys121 is covalently cross-linked (Glycyl lysine isopeptide (Lys-Gly) (interchain with G-Cter in SUMO2)). The residue at position 181 (Ser181) is a Phosphoserine. The bZIP domain occupies 204-267 (SLEYRLRRER…DTLRNLFRQI (64 aa)). The tract at residues 208-245 (RLRRERNNIAVRKSRDKAKRRIMETQQKVLEYMAENER) is basic motif. The segment at 246–267 (LRNRVDQLTQELDTLRNLFRQI) is leucine-zipper.

Belongs to the bZIP family. C/EBP subfamily. Binds DNA as a homodimer and as a heterodimer. Can form stable heterodimers with CEBPA, CEBPB and CEBPD. Interacts with GATA1 and SPI1. Interacts with SMARCD2. Post-translationally, phosphorylated.

It is found in the nucleus. Its function is as follows. Transcriptional activator. C/EBP are DNA-binding proteins that recognize two different motifs: the CCAAT homology common to many promoters and the enhanced core homology common to many enhancers. Required for the promyelocyte-myelocyte transition in myeloid differentiation. The polypeptide is CCAAT/enhancer-binding protein epsilon (Cebpe) (Mus musculus (Mouse)).